A 390-amino-acid polypeptide reads, in one-letter code: Stearoyl-[acyl-carrier-protein] 9-desaturase, chloroplastic (390 aa).

A chloroplast-targeting transit peptide spans 1–27 (MALKLCFPPHKMPSFPDARIRSHRVFM). Glu-132, Glu-170, His-173, Glu-223, Glu-256, and His-259 together coordinate Fe cation.

Belongs to the fatty acid desaturase type 2 family. Homodimer. Requires Fe(2+) as cofactor.

Its subcellular location is the plastid. The protein resides in the chloroplast. The catalysed reaction is octadecanoyl-[ACP] + 2 reduced [2Fe-2S]-[ferredoxin] + O2 + 2 H(+) = (9Z)-octadecenoyl-[ACP] + 2 oxidized [2Fe-2S]-[ferredoxin] + 2 H2O. It functions in the pathway lipid metabolism; fatty acid metabolism. Converts stearoyl-ACP to oleoyl-ACP by introduction of a cis double bond between carbons 9 and 10 of the acyl chain. This Olea europaea (Common olive) protein is Stearoyl-[acyl-carrier-protein] 9-desaturase, chloroplastic.